A 330-amino-acid chain; its full sequence is Methylthioribose-1-phosphate isomerase (330 aa).

Substrate is bound by residues Arg49–Ala51, Arg83, and Gln179. Asp220 (proton donor) is an active-site residue. Asn230 to Lys231 is a binding site for substrate.

This sequence belongs to the eIF-2B alpha/beta/delta subunits family. MtnA subfamily.

It carries out the reaction 5-(methylsulfanyl)-alpha-D-ribose 1-phosphate = 5-(methylsulfanyl)-D-ribulose 1-phosphate. The protein operates within amino-acid biosynthesis; L-methionine biosynthesis via salvage pathway; L-methionine from S-methyl-5-thio-alpha-D-ribose 1-phosphate: step 1/6. Catalyzes the interconversion of methylthioribose-1-phosphate (MTR-1-P) into methylthioribulose-1-phosphate (MTRu-1-P). The protein is Methylthioribose-1-phosphate isomerase of Thermus thermophilus (strain ATCC 27634 / DSM 579 / HB8).